Here is a 160-residue protein sequence, read N- to C-terminus: Large ribosomal subunit protein uL10 (160 aa).

The protein belongs to the universal ribosomal protein uL10 family. Part of the ribosomal stalk of the 50S ribosomal subunit. The N-terminus interacts with L11 and the large rRNA to form the base of the stalk. The C-terminus forms an elongated spine to which L12 dimers bind in a sequential fashion forming a multimeric L10(L12)X complex.

In terms of biological role, forms part of the ribosomal stalk, playing a central role in the interaction of the ribosome with GTP-bound translation factors. In Ehrlichia canis (strain Jake), this protein is Large ribosomal subunit protein uL10.